A 76-amino-acid polypeptide reads, in one-letter code: Sea anemone sodium channel inhibitor type I (76 aa).

An N-terminal signal peptide occupies residues Met-1 to Gly-19. A propeptide spanning residues Leu-20–Ala-30 is cleaved from the precursor. 3 disulfide bridges follow: Cys-37/Cys-72, Cys-39/Cys-60, and Cys-53/Cys-73.

Belongs to the sea anemone sodium channel inhibitory toxin family. Type I subfamily. Expressed in acontia, a specialised envenomation structure laden with batteries of venom-containing nematocysts found only in the superfamily Metridioidea.

The protein resides in the secreted. The protein localises to the nematocyst. In terms of biological role, may affect sodium channels (Nav). This is Sea anemone sodium channel inhibitor type I from Calliactis polypus (Hermit crab anemone).